The primary structure comprises 144 residues: D-aminoacyl-tRNA deacylase (144 aa).

Residues 136 to 137 (GP) carry the Gly-cisPro motif, important for rejection of L-amino acids motif.

The protein belongs to the DTD family. Homodimer.

The protein resides in the cytoplasm. The enzyme catalyses glycyl-tRNA(Ala) + H2O = tRNA(Ala) + glycine + H(+). It catalyses the reaction a D-aminoacyl-tRNA + H2O = a tRNA + a D-alpha-amino acid + H(+). An aminoacyl-tRNA editing enzyme that deacylates mischarged D-aminoacyl-tRNAs. Also deacylates mischarged glycyl-tRNA(Ala), protecting cells against glycine mischarging by AlaRS. Acts via tRNA-based rather than protein-based catalysis; rejects L-amino acids rather than detecting D-amino acids in the active site. By recycling D-aminoacyl-tRNA to D-amino acids and free tRNA molecules, this enzyme counteracts the toxicity associated with the formation of D-aminoacyl-tRNA entities in vivo and helps enforce protein L-homochirality. This chain is D-aminoacyl-tRNA deacylase, found in Aliivibrio salmonicida (strain LFI1238) (Vibrio salmonicida (strain LFI1238)).